The chain runs to 116 residues: G antigen 10 (116 aa).

The disordered stretch occupies residues 1 to 116; sequence MSWRGRSTYR…PEEGEKQSQC (116 aa). Residues 31 to 44 are compositionally biased toward acidic residues; that stretch reads FSDEVEPATPEEGE. Composition is skewed to basic and acidic residues over residues 71–80 and 102–116; these read PEADSQEQVH and EEVK…QSQC.

The protein belongs to the GAGE family.

This chain is G antigen 10 (GAGE10), found in Homo sapiens (Human).